The sequence spans 219 residues: Small ribosomal subunit protein uS3 (219 aa).

In terms of domain architecture, KH type-2 spans 39 to 108 (IKEFIKKNYF…KVTVKVQEIK (70 aa)).

This sequence belongs to the universal ribosomal protein uS3 family. In terms of assembly, part of the 30S ribosomal subunit. Forms a tight complex with proteins S10 and S14.

Binds the lower part of the 30S subunit head. Binds mRNA in the 70S ribosome, positioning it for translation. This chain is Small ribosomal subunit protein uS3, found in Fusobacterium nucleatum subsp. nucleatum (strain ATCC 25586 / DSM 15643 / BCRC 10681 / CIP 101130 / JCM 8532 / KCTC 2640 / LMG 13131 / VPI 4355).